A 545-amino-acid polypeptide reads, in one-letter code: B3 domain-containing protein Os03g0620500 (545 aa).

Positions 26 to 119 (MKCFHRQMSA…RRASGVQERN (94 aa)) form a DNA-binding region, TF-B3 1. The segment at 111–188 (RASGVQERNA…SSSEHESSYD (78 aa)) is disordered. Basic and acidic residues predominate over residues 173–186 (EEAKESSSSEHESS). The segment at residues 231-331 (VTTMKHSNVN…RATVHLLRET (101 aa)) is a DNA-binding region (TF-B3 2). Residues 368–400 (RRGTMEPSTTNVKKEADNEQCNNGQGKRQEPLN) form a disordered region. The segment at residues 441–542 (YVSIMNKSNV…AMKVHIIRHN (102 aa)) is a DNA-binding region (TF-B3 3).

The protein resides in the nucleus. The polypeptide is B3 domain-containing protein Os03g0620500 (Oryza sativa subsp. japonica (Rice)).